The chain runs to 315 residues: MQIKLANPRGFCAGVDRAIEIVNRALEVFGPPIYVRHEVVHNKFVVEDLRARGAIFVEELDQVPDDVIVIFSAHGVSQAVRTEAAGRGLKVFDATCPLVTKVHIEVARYSRDGRECILIGHAGHPEVEGTMGQYDASNGGAIYLVEDEKDVANLQVQNPERLAFVTQTTLSMDDTSRVIDALRSRFPAIGGPRKDDICYATQNRQDAVKQLADECDVVLVVGSPNSSNSNRLRELAERMATPAYLIDGAEDMQRSWFDGVERIGITAGASAPEVLVRGVIQQLHAWGATGADELAGREENITFSMPKELRVRSLL.

Cys-12 is a [4Fe-4S] cluster binding site. Positions 41 and 74 each coordinate (2E)-4-hydroxy-3-methylbut-2-enyl diphosphate. Dimethylallyl diphosphate contacts are provided by His-41 and His-74. The isopentenyl diphosphate site is built by His-41 and His-74. Residue Cys-96 coordinates [4Fe-4S] cluster. His-124 is a binding site for (2E)-4-hydroxy-3-methylbut-2-enyl diphosphate. Residue His-124 coordinates dimethylallyl diphosphate. Isopentenyl diphosphate is bound at residue His-124. The Proton donor role is filled by Glu-126. Thr-168 is a (2E)-4-hydroxy-3-methylbut-2-enyl diphosphate binding site. Residue Cys-198 participates in [4Fe-4S] cluster binding. (2E)-4-hydroxy-3-methylbut-2-enyl diphosphate contacts are provided by Ser-226, Ser-227, Asn-228, and Ser-270. Ser-226, Ser-227, Asn-228, and Ser-270 together coordinate dimethylallyl diphosphate. Ser-226, Ser-227, Asn-228, and Ser-270 together coordinate isopentenyl diphosphate.

This sequence belongs to the IspH family. [4Fe-4S] cluster is required as a cofactor.

It catalyses the reaction isopentenyl diphosphate + 2 oxidized [2Fe-2S]-[ferredoxin] + H2O = (2E)-4-hydroxy-3-methylbut-2-enyl diphosphate + 2 reduced [2Fe-2S]-[ferredoxin] + 2 H(+). The enzyme catalyses dimethylallyl diphosphate + 2 oxidized [2Fe-2S]-[ferredoxin] + H2O = (2E)-4-hydroxy-3-methylbut-2-enyl diphosphate + 2 reduced [2Fe-2S]-[ferredoxin] + 2 H(+). Its pathway is isoprenoid biosynthesis; dimethylallyl diphosphate biosynthesis; dimethylallyl diphosphate from (2E)-4-hydroxy-3-methylbutenyl diphosphate: step 1/1. It participates in isoprenoid biosynthesis; isopentenyl diphosphate biosynthesis via DXP pathway; isopentenyl diphosphate from 1-deoxy-D-xylulose 5-phosphate: step 6/6. Catalyzes the conversion of 1-hydroxy-2-methyl-2-(E)-butenyl 4-diphosphate (HMBPP) into a mixture of isopentenyl diphosphate (IPP) and dimethylallyl diphosphate (DMAPP). Acts in the terminal step of the DOXP/MEP pathway for isoprenoid precursor biosynthesis. This chain is 4-hydroxy-3-methylbut-2-enyl diphosphate reductase, found in Pseudomonas fluorescens (strain SBW25).